We begin with the raw amino-acid sequence, 76 residues long: Acyl carrier protein (76 aa).

The 75-residue stretch at 2–76 folds into the Carrier domain; that stretch reads SNIEERVIKV…QSAIDFVKSR (75 aa). S37 is subject to O-(pantetheine 4'-phosphoryl)serine.

This sequence belongs to the acyl carrier protein (ACP) family. In terms of processing, 4'-phosphopantetheine is transferred from CoA to a specific serine of apo-ACP by AcpS. This modification is essential for activity because fatty acids are bound in thioester linkage to the sulfhydryl of the prosthetic group.

The protein localises to the cytoplasm. It participates in lipid metabolism; fatty acid biosynthesis. Functionally, carrier of the growing fatty acid chain in fatty acid biosynthesis. The polypeptide is Acyl carrier protein (Dichelobacter nodosus (strain VCS1703A)).